A 257-amino-acid chain; its full sequence is Triosephosphate isomerase (257 aa).

Positions 12 and 14 each coordinate substrate. Residue histidine 98 is the Electrophile of the active site. The active-site Proton acceptor is the glutamate 169.

Belongs to the triosephosphate isomerase family. As to quaternary structure, homodimer.

It carries out the reaction D-glyceraldehyde 3-phosphate = dihydroxyacetone phosphate. Its pathway is carbohydrate biosynthesis; gluconeogenesis. It functions in the pathway carbohydrate degradation; glycolysis; D-glyceraldehyde 3-phosphate from glycerone phosphate: step 1/1. This chain is Triosephosphate isomerase (tpiA), found in Dictyostelium discoideum (Social amoeba).